A 313-amino-acid polypeptide reads, in one-letter code: Putative S-adenosyl-L-methionine-dependent methyltransferase MAP_3563 (313 aa).

S-adenosyl-L-methionine is bound by residues Asp-139 and 168 to 169 (DL).

The protein belongs to the UPF0677 family.

Exhibits S-adenosyl-L-methionine-dependent methyltransferase activity. This chain is Putative S-adenosyl-L-methionine-dependent methyltransferase MAP_3563, found in Mycolicibacterium paratuberculosis (strain ATCC BAA-968 / K-10) (Mycobacterium paratuberculosis).